A 298-amino-acid polypeptide reads, in one-letter code: GTPase Era (298 aa).

The Era-type G domain occupies 8–176 (HCGSVAVIGR…VRDVLALLPE (169 aa)). Positions 16 to 23 (GRPNVGKS) are G1. 16–23 (GRPNVGKS) serves as a coordination point for GTP. The G2 stretch occupies residues 42–46 (QTTRH). The tract at residues 63-66 (DTPG) is G3. GTP contacts are provided by residues 63 to 67 (DTPGL) and 125 to 128 (NKID). The segment at 125-128 (NKID) is G4. Positions 155 to 157 (ISA) are G5. The KH type-2 domain occupies 199–283 (VREQLMRQLG…FLETWVRVRE (85 aa)).

The protein belongs to the TRAFAC class TrmE-Era-EngA-EngB-Septin-like GTPase superfamily. Era GTPase family. In terms of assembly, monomer.

It localises to the cytoplasm. The protein localises to the cell inner membrane. Functionally, an essential GTPase that binds both GDP and GTP, with rapid nucleotide exchange. Plays a role in 16S rRNA processing and 30S ribosomal subunit biogenesis and possibly also in cell cycle regulation and energy metabolism. This Stenotrophomonas maltophilia (strain R551-3) protein is GTPase Era.